Here is a 244-residue protein sequence, read N- to C-terminus: Orotidine 5'-phosphate decarboxylase (244 aa).

Substrate-binding positions include Asp20, Lys42, Asp70–Thr79, Thr125, Arg186, Gln195, Gly215, and Arg216. The active-site Proton donor is Lys72.

The protein belongs to the OMP decarboxylase family. Type 1 subfamily. Homodimer.

The enzyme catalyses orotidine 5'-phosphate + H(+) = UMP + CO2. It participates in pyrimidine metabolism; UMP biosynthesis via de novo pathway; UMP from orotate: step 2/2. Its function is as follows. Catalyzes the decarboxylation of orotidine 5'-monophosphate (OMP) to uridine 5'-monophosphate (UMP). The chain is Orotidine 5'-phosphate decarboxylase from Xylella fastidiosa (strain M12).